The following is a 110-amino-acid chain: Large ribosomal subunit protein uL24 (110 aa).

Belongs to the universal ribosomal protein uL24 family. As to quaternary structure, part of the 50S ribosomal subunit.

In terms of biological role, one of two assembly initiator proteins, it binds directly to the 5'-end of the 23S rRNA, where it nucleates assembly of the 50S subunit. Functionally, one of the proteins that surrounds the polypeptide exit tunnel on the outside of the subunit. The chain is Large ribosomal subunit protein uL24 from Chloroflexus aggregans (strain MD-66 / DSM 9485).